We begin with the raw amino-acid sequence, 446 residues long: Exodeoxyribonuclease 7 large subunit (446 aa).

It belongs to the XseA family. As to quaternary structure, heterooligomer composed of large and small subunits.

The protein localises to the cytoplasm. The catalysed reaction is Exonucleolytic cleavage in either 5'- to 3'- or 3'- to 5'-direction to yield nucleoside 5'-phosphates.. Bidirectionally degrades single-stranded DNA into large acid-insoluble oligonucleotides, which are then degraded further into small acid-soluble oligonucleotides. This is Exodeoxyribonuclease 7 large subunit from Streptococcus thermophilus (strain ATCC BAA-250 / LMG 18311).